The primary structure comprises 215 residues: Large ribosomal subunit protein uL3 (215 aa).

The segment at 136 to 155 (GVSISHRSHGSTGQRQDPGK) is disordered. The residue at position 151 (Gln151) is an N5-methylglutamine.

The protein belongs to the universal ribosomal protein uL3 family. As to quaternary structure, part of the 50S ribosomal subunit. Forms a cluster with proteins L14 and L19. Post-translationally, methylated by PrmB.

Functionally, one of the primary rRNA binding proteins, it binds directly near the 3'-end of the 23S rRNA, where it nucleates assembly of the 50S subunit. This chain is Large ribosomal subunit protein uL3, found in Rickettsia typhi (strain ATCC VR-144 / Wilmington).